Consider the following 255-residue polypeptide: Small ribosomal subunit protein eS4 (255 aa).

The S4 RNA-binding domain occupies 43–115 (IPLLILVRDV…PTRFFTLHPI (73 aa)).

Belongs to the eukaryotic ribosomal protein eS4 family.

This Hyperthermus butylicus (strain DSM 5456 / JCM 9403 / PLM1-5) protein is Small ribosomal subunit protein eS4.